We begin with the raw amino-acid sequence, 197 residues long: Carbohydrate-binding domain-containing protein C2E1P3.05c (197 aa).

Positions 1-23 (MLTQSLFLTVLTLALSLVSKTSA) are cleaved as a signal peptide. CBM1 domains lie at 25-61 (QCSP…SQCI) and 68-104 (PCAK…SQCI). 4 cysteine pairs are disulfide-bonded: Cys-33/Cys-50, Cys-44/Cys-60, Cys-76/Cys-93, and Cys-87/Cys-103. A disordered region spans residues 115 to 163 (SSAASSTTSTTSSSSLVSSTTLTSSSPSAVSSTTSIPSISSTISSSVST). N-linked (GlcNAc...) asparagine glycosylation is found at Asn-182 and Asn-193.

It localises to the secreted. This chain is Carbohydrate-binding domain-containing protein C2E1P3.05c, found in Schizosaccharomyces pombe (strain 972 / ATCC 24843) (Fission yeast).